Reading from the N-terminus, the 456-residue chain is Methionine aminopeptidase 2 (456 aa).

Positions 1 to 11 are enriched in pro residues; that stretch reads MTIPVPKPAHP. Positions 1 to 127 are disordered; it reads MTIPVPKPAH…SYRTTSSEKR (127 aa). The span at 31–45 shows a compositional bias: acidic residues; sequence EADEEEDDDDEEGKE. Positions 66–79 are enriched in basic residues; the sequence is KKKKKKKKKPKKKK. His-209 is a binding site for substrate. Residues Asp-229, Asp-240, and His-309 each coordinate a divalent metal cation. Residue His-317 participates in substrate binding. Residues Glu-343 and Glu-437 each coordinate a divalent metal cation.

It belongs to the peptidase M24A family. Methionine aminopeptidase eukaryotic type 2 subfamily. Co(2+) serves as cofactor. It depends on Zn(2+) as a cofactor. Mn(2+) is required as a cofactor. The cofactor is Fe(2+).

Its subcellular location is the cytoplasm. The catalysed reaction is Release of N-terminal amino acids, preferentially methionine, from peptides and arylamides.. In terms of biological role, cotranslationally removes the N-terminal methionine from nascent proteins. The N-terminal methionine is often cleaved when the second residue in the primary sequence is small and uncharged (Met-Ala-, Cys, Gly, Pro, Ser, Thr, or Val). The sequence is that of Methionine aminopeptidase 2 from Puccinia graminis f. sp. tritici (strain CRL 75-36-700-3 / race SCCL) (Black stem rust fungus).